The primary structure comprises 253 residues: uncharacterized protein (253 aa).

Positions 30–236 (AQGRQVAQLW…AVDDDAALMA (207 aa)) constitute a BPL/LPL catalytic domain.

This is an uncharacterized protein from Cupriavidus necator (strain ATCC 17699 / DSM 428 / KCTC 22496 / NCIMB 10442 / H16 / Stanier 337) (Ralstonia eutropha).